A 776-amino-acid chain; its full sequence is Mitochondrial intermediate peptidase (776 aa).

The transit peptide at 1 to 28 (MRRFSTLSRRLQRVVPASSASTANTSPS) directs the protein to the mitochondrion. Histidine 561 lines the Zn(2+) pocket. The active site involves glutamate 562. Residues histidine 565 and histidine 568 each coordinate Zn(2+).

This sequence belongs to the peptidase M3 family. Zn(2+) serves as cofactor.

Its subcellular location is the mitochondrion matrix. It carries out the reaction Release of an N-terminal octapeptide as second stage of processing of some proteins imported into the mitochondrion.. In terms of biological role, cleaves proteins, imported into the mitochondrion, to their mature size. While most mitochondrial precursor proteins are processed to the mature form in one step by mitochondrial processing peptidase (MPP), the sequential cleavage by MIP of an octapeptide after initial processing by MPP is a required step for a subgroup of nuclear-encoded precursor proteins destined for the matrix or the inner membrane. The sequence is that of Mitochondrial intermediate peptidase (OCT1) from Yarrowia lipolytica (strain CLIB 122 / E 150) (Yeast).